A 224-amino-acid polypeptide reads, in one-letter code: Ribonuclease 3 (224 aa).

The region spanning 4–127 (IEKLEQSLTY…IIGAIHLEAG (124 aa)) is the RNase III domain. Mg(2+) is bound at residue glutamate 40. Aspartate 44 is an active-site residue. 2 residues coordinate Mg(2+): aspartate 113 and glutamate 116. The active site involves glutamate 116. A DRBM domain is found at 154–223 (DYKTKLQEIT…AKIALEKLGA (70 aa)).

The protein belongs to the ribonuclease III family. In terms of assembly, homodimer. It depends on Mg(2+) as a cofactor.

Its subcellular location is the cytoplasm. The enzyme catalyses Endonucleolytic cleavage to 5'-phosphomonoester.. In terms of biological role, digests double-stranded RNA. Involved in the processing of primary rRNA transcript to yield the immediate precursors to the large and small rRNAs (23S and 16S). Also processes some mRNAs, and tRNAs when they are encoded in the rRNA operon. CRISPR (clustered regularly interspaced short palindromic repeat) is an adaptive immune system that provides protection against mobile genetic elements (viruses, transposable elements and conjugative plasmids). CRISPR clusters contain spacers, sequences complementary to antecedent mobile elements, and target invading nucleic acids. CRISPR clusters are transcribed and processed into CRISPR RNA (crRNA). In this organism endogenous ribonuclease 3 and Cas9 are required for correct coprocessing of pre-crRNA and the trans-encoded small RNA (tracrRNA). Cas9, crRNA and tracrRNA are required for cleavage of invading DNA. Complements pre-crRNA and tracrRNA coprocessing defects in an rnc deletion in S.pyogenes strain 370. This is Ribonuclease 3 from Campylobacter jejuni subsp. jejuni serotype O:2 (strain ATCC 700819 / NCTC 11168).